The sequence spans 461 residues: Cysteine--tRNA ligase (461 aa).

Cys-28 is a binding site for Zn(2+). A 'HIGH' region motif is present at residues 30 to 40 (ITVYDLCHIGH). 3 residues coordinate Zn(2+): Cys-209, His-234, and Glu-238. Positions 266–270 (KMSKS) match the 'KMSKS' region motif. Position 269 (Lys-269) interacts with ATP.

This sequence belongs to the class-I aminoacyl-tRNA synthetase family. As to quaternary structure, monomer. Zn(2+) serves as cofactor.

The protein resides in the cytoplasm. It catalyses the reaction tRNA(Cys) + L-cysteine + ATP = L-cysteinyl-tRNA(Cys) + AMP + diphosphate. The protein is Cysteine--tRNA ligase of Salmonella dublin (strain CT_02021853).